The primary structure comprises 152 residues: Xanthine-guanine phosphoribosyltransferase (152 aa).

Residues 37 to 38 (RG), Arg69, and 88 to 96 (DDLVDTGGT) contribute to the 5-phospho-alpha-D-ribose 1-diphosphate site. Arg69 provides a ligand contact to GMP. Asp89 is a binding site for Mg(2+). Positions 92 and 135 each coordinate guanine. Residues Asp92 and Ile135 each contribute to the xanthine site. Residues 92–96 (DTGGT) and 134–135 (WI) each bind GMP.

The protein belongs to the purine/pyrimidine phosphoribosyltransferase family. XGPT subfamily. Homotetramer. Mg(2+) serves as cofactor.

The protein localises to the cell inner membrane. It carries out the reaction GMP + diphosphate = guanine + 5-phospho-alpha-D-ribose 1-diphosphate. It catalyses the reaction XMP + diphosphate = xanthine + 5-phospho-alpha-D-ribose 1-diphosphate. The catalysed reaction is IMP + diphosphate = hypoxanthine + 5-phospho-alpha-D-ribose 1-diphosphate. It participates in purine metabolism; GMP biosynthesis via salvage pathway; GMP from guanine: step 1/1. It functions in the pathway purine metabolism; XMP biosynthesis via salvage pathway; XMP from xanthine: step 1/1. In terms of biological role, purine salvage pathway enzyme that catalyzes the transfer of the ribosyl-5-phosphate group from 5-phospho-alpha-D-ribose 1-diphosphate (PRPP) to the N9 position of the 6-oxopurines guanine and xanthine to form the corresponding ribonucleotides GMP (guanosine 5'-monophosphate) and XMP (xanthosine 5'-monophosphate), with the release of PPi. To a lesser extent, also acts on hypoxanthine. This chain is Xanthine-guanine phosphoribosyltransferase, found in Salmonella choleraesuis (strain SC-B67).